The primary structure comprises 389 residues: MTSRKPLGRYRRIVIKIGSALLVDRKAGLKKAWLDAMCADISGLKAKGIDVLVVSSGAIALGRSVLDLPSGALKLEESQAAAAVGQIALARAWSESLSRDEIVAGQILLTLGDTEERRRYLNARATINQLLKIGAVPIINENDTVATSEIRYGDNDRLAARVATMTGADLLILLSDIDGLYTAPPHLDPNATFLETIAEITPEIEAMAGGAASELSRGGMRTKIDAGKIATASGCAMIIASGKTENPLSAIENGARSSWFAPSGTPVTARKTWIAGQLQPAGELHVDDGAVTALGAGKSLLPAGVRSVSGLFSRGDTVAIIGPAGREIARGLVSYDADDARRIAGRKSAEIETILGYPGRAAMVHRDDMVMTAQIGSKSERQKKDASYA.

Lys16 provides a ligand contact to ATP. Ser56, Asp143, and Asn155 together coordinate substrate. An ATP-binding site is contributed by 175 to 176 (SD). One can recognise a PUA domain in the interval 281 to 358 (AGELHVDDGA…AEIETILGYP (78 aa)).

It belongs to the glutamate 5-kinase family.

The protein resides in the cytoplasm. The catalysed reaction is L-glutamate + ATP = L-glutamyl 5-phosphate + ADP. It participates in amino-acid biosynthesis; L-proline biosynthesis; L-glutamate 5-semialdehyde from L-glutamate: step 1/2. Catalyzes the transfer of a phosphate group to glutamate to form L-glutamate 5-phosphate. The sequence is that of Glutamate 5-kinase from Rhizobium johnstonii (strain DSM 114642 / LMG 32736 / 3841) (Rhizobium leguminosarum bv. viciae).